A 455-amino-acid polypeptide reads, in one-letter code: UDP-N-acetylmuramoylalanine--D-glutamate ligase (455 aa).

Residue 117–123 (GTNGKTT) coordinates ATP.

This sequence belongs to the MurCDEF family.

The protein resides in the cytoplasm. The enzyme catalyses UDP-N-acetyl-alpha-D-muramoyl-L-alanine + D-glutamate + ATP = UDP-N-acetyl-alpha-D-muramoyl-L-alanyl-D-glutamate + ADP + phosphate + H(+). The protein operates within cell wall biogenesis; peptidoglycan biosynthesis. Its function is as follows. Cell wall formation. Catalyzes the addition of glutamate to the nucleotide precursor UDP-N-acetylmuramoyl-L-alanine (UMA). The chain is UDP-N-acetylmuramoylalanine--D-glutamate ligase from Alkaliphilus metalliredigens (strain QYMF).